Here is a 171-residue protein sequence, read N- to C-terminus: Ribosome maturation factor RimM (171 aa).

The PRC barrel domain occupies 97-170; the sequence is EGEYYYHEII…LVTIHVMEGL (74 aa).

Belongs to the RimM family. In terms of assembly, binds ribosomal protein uS19.

The protein resides in the cytoplasm. In terms of biological role, an accessory protein needed during the final step in the assembly of 30S ribosomal subunit, possibly for assembly of the head region. Essential for efficient processing of 16S rRNA. May be needed both before and after RbfA during the maturation of 16S rRNA. It has affinity for free ribosomal 30S subunits but not for 70S ribosomes. The polypeptide is Ribosome maturation factor RimM (Bacillus cereus (strain ZK / E33L)).